A 73-amino-acid polypeptide reads, in one-letter code: Translation initiation factor IF-1 (73 aa).

An S1-like domain is found at Met1 to Arg73.

It belongs to the IF-1 family. In terms of assembly, component of the 30S ribosomal translation pre-initiation complex which assembles on the 30S ribosome in the order IF-2 and IF-3, IF-1 and N-formylmethionyl-tRNA(fMet); mRNA recruitment can occur at any time during PIC assembly.

The protein localises to the cytoplasm. One of the essential components for the initiation of protein synthesis. Stabilizes the binding of IF-2 and IF-3 on the 30S subunit to which N-formylmethionyl-tRNA(fMet) subsequently binds. Helps modulate mRNA selection, yielding the 30S pre-initiation complex (PIC). Upon addition of the 50S ribosomal subunit IF-1, IF-2 and IF-3 are released leaving the mature 70S translation initiation complex. In Acidothermus cellulolyticus (strain ATCC 43068 / DSM 8971 / 11B), this protein is Translation initiation factor IF-1.